A 151-amino-acid chain; its full sequence is Small ribosomal subunit protein uS11 (151 aa).

A disordered region spans residues 129–151; the sequence is IEDVTPVPSDSTRRKGGRRGRRL. A compositionally biased stretch (basic residues) spans 142–151; it reads RKGGRRGRRL.

It belongs to the universal ribosomal protein uS11 family.

The polypeptide is Small ribosomal subunit protein uS11 (RPS14) (Procambarus clarkii (Red swamp crayfish)).